The following is a 162-amino-acid chain: Transcription antitermination protein RfaH (162 aa).

It belongs to the RfaH family. In terms of assembly, interacts with both the nontemplate DNA and the RNA polymerase (RNAP).

Enhances distal genes transcription elongation in a specialized subset of operons that encode extracytoplasmic components. RfaH is recruited into a multi-component RNA polymerase complex by the ops element, which is a short conserved DNA sequence located downstream of the main promoter of these operons. Once bound, RfaH suppresses pausing and inhibits Rho-dependent and intrinsic termination at a subset of sites. Termination signals are bypassed, which allows complete synthesis of long RNA chains. Also negatively controls expression and surface presentation of AG43 and possibly another AG43-independent factor that mediates cell-cell interactions and biofilm formation,. This Escherichia coli O6:K15:H31 (strain 536 / UPEC) protein is Transcription antitermination protein RfaH.